Reading from the N-terminus, the 116-residue chain is MANHRIDRVGMEIKREVNDILQKKVRDPRVQGVTITEVQMQGDLSLAKVYYTIMSDLASDNQKAQTGLEKATGTIKRELGKQLTMYKIPDLVFEKDNSIAYGNKIDQLLRELDKKD.

It belongs to the RbfA family. As to quaternary structure, monomer. Binds 30S ribosomal subunits, but not 50S ribosomal subunits or 70S ribosomes.

It localises to the cytoplasm. One of several proteins that assist in the late maturation steps of the functional core of the 30S ribosomal subunit. Associates with free 30S ribosomal subunits (but not with 30S subunits that are part of 70S ribosomes or polysomes). Required for efficient processing of 16S rRNA. May interact with the 5'-terminal helix region of 16S rRNA. The sequence is that of Ribosome-binding factor A from Streptococcus pyogenes serotype M28 (strain MGAS6180).